The following is a 246-amino-acid chain: Bis(5'-nucleosyl)-tetraphosphatase PrpE [asymmetrical] (246 aa).

This sequence belongs to the PrpE family. Ni(2+) is required as a cofactor.

The catalysed reaction is P(1),P(4)-bis(5'-guanosyl) tetraphosphate + H2O = GMP + GTP + 2 H(+). In terms of biological role, asymmetrically hydrolyzes Ap4p to yield AMP and ATP. The protein is Bis(5'-nucleosyl)-tetraphosphatase PrpE [asymmetrical] of Bacillus cereus (strain AH820).